We begin with the raw amino-acid sequence, 531 residues long: Serine protease gd (531 aa).

The first 19 residues, 1-19 (MRLHLAAILILCIEHVTKA), serve as a signal peptide directing secretion. The interval 155 to 174 (PEEEEVRKTDDKPPSTPHIQ) is disordered. Positions 246 to 531 (IESDSADSLP…FLDWITAFVI (286 aa)) constitute a Peptidase S1 domain. The N-linked (GlcNAc...) asparagine glycan is linked to asparagine 272. A disulfide bridge connects residues cysteine 280 and cysteine 296. Residues histidine 295 and aspartate 350 each act as charge relay system in the active site. 2 N-linked (GlcNAc...) asparagine glycosylation sites follow: asparagine 397 and asparagine 445. An intrachain disulfide couples cysteine 432 to cysteine 449. The Charge relay system role is filled by serine 471.

This sequence belongs to the peptidase S1 family. Post-translationally, proteolytically activated by the protease ndl. As to expression, expression begins in previtellogenic stages and is seen in germline-derived nurse cells of the germarium. Expression continues throughout oogenesis with transcripts from the nurse cells accumulating in the oocytes. Most abundant in the ovaries, the level of protein decreases from the moment of egg laying and is essentially gone by 4 hours.

The protein resides in the secreted. Functionally, component of the extracellular signaling pathway that establishes the dorsal-ventral pathway of the embryo. A protease cascade involving ndl, gd, snk and ea results in activation of the spz Toll receptor ligand; acts downstream of ndl but upstream of snk and ea. Activation of ea requires activation of the ndl-gd-snk protease cascade and sulfation of a vitelline membrane component by pip. Localized activation of the Toll receptor in the ventral region of the embryo defines cell identities along the dorsal-ventral continuum. The sequence is that of Serine protease gd from Drosophila melanogaster (Fruit fly).